Consider the following 377-residue polypeptide: Mitogen-activated protein kinase mpkC (377 aa).

In terms of domain architecture, Protein kinase spans 20–299 (YVNPQPIGMG…AQDALRHPYL (280 aa)). ATP contacts are provided by residues 26–34 (IGMGSFGLV) and Lys49. Asp141 functions as the Proton acceptor in the catalytic mechanism. A Phosphothreonine modification is found at Thr171. A TXY motif is present at residues 171-173 (TGY). At Tyr173 the chain carries Phosphotyrosine.

It belongs to the protein kinase superfamily. Ser/Thr protein kinase family. MAP kinase subfamily. HOG1 sub-subfamily. Mg(2+) is required as a cofactor. Dually phosphorylated on Thr-171 and Tyr-173, which activates the enzyme.

It carries out the reaction L-seryl-[protein] + ATP = O-phospho-L-seryl-[protein] + ADP + H(+). The catalysed reaction is L-threonyl-[protein] + ATP = O-phospho-L-threonyl-[protein] + ADP + H(+). Its activity is regulated as follows. Activated by tyrosine and threonine phosphorylation. In terms of biological role, mitogen-activated protein kinase required for growth on media where sorbitol or mannitol is the sole carbon source. The polypeptide is Mitogen-activated protein kinase mpkC (mpkc) (Neosartorya fischeri (strain ATCC 1020 / DSM 3700 / CBS 544.65 / FGSC A1164 / JCM 1740 / NRRL 181 / WB 181) (Aspergillus fischerianus)).